Here is a 136-residue protein sequence, read N- to C-terminus: Nucleoside diphosphate kinase (136 aa).

ATP-binding residues include Lys-10, Phe-58, Arg-86, Thr-92, Arg-104, and Asn-114. His-117 functions as the Pros-phosphohistidine intermediate in the catalytic mechanism.

Belongs to the NDK family. As to quaternary structure, homotetramer. The cofactor is Mg(2+).

The protein localises to the cytoplasm. It catalyses the reaction a 2'-deoxyribonucleoside 5'-diphosphate + ATP = a 2'-deoxyribonucleoside 5'-triphosphate + ADP. It carries out the reaction a ribonucleoside 5'-diphosphate + ATP = a ribonucleoside 5'-triphosphate + ADP. Functionally, major role in the synthesis of nucleoside triphosphates other than ATP. The ATP gamma phosphate is transferred to the NDP beta phosphate via a ping-pong mechanism, using a phosphorylated active-site intermediate. The chain is Nucleoside diphosphate kinase from Saccharopolyspora erythraea (strain ATCC 11635 / DSM 40517 / JCM 4748 / NBRC 13426 / NCIMB 8594 / NRRL 2338).